The sequence spans 461 residues: Kynureninase (461 aa).

Pyridoxal 5'-phosphate-binding positions include Leu-114, Thr-115, 142–145, Asp-228, His-231, and Tyr-253; that span reads FPSD. Lys-254 carries the N6-(pyridoxal phosphate)lysine modification. Pyridoxal 5'-phosphate-binding residues include Trp-288 and Asn-316.

It belongs to the kynureninase family. Homodimer. The cofactor is pyridoxal 5'-phosphate.

The protein localises to the cytoplasm. It catalyses the reaction L-kynurenine + H2O = anthranilate + L-alanine + H(+). It carries out the reaction 3-hydroxy-L-kynurenine + H2O = 3-hydroxyanthranilate + L-alanine + H(+). Its pathway is amino-acid degradation; L-kynurenine degradation; L-alanine and anthranilate from L-kynurenine: step 1/1. It participates in cofactor biosynthesis; NAD(+) biosynthesis; quinolinate from L-kynurenine: step 2/3. Catalyzes the cleavage of L-kynurenine (L-Kyn) and L-3-hydroxykynurenine (L-3OHKyn) into anthranilic acid (AA) and 3-hydroxyanthranilic acid (3-OHAA), respectively. This is Kynureninase from Lodderomyces elongisporus (strain ATCC 11503 / CBS 2605 / JCM 1781 / NBRC 1676 / NRRL YB-4239) (Yeast).